A 234-amino-acid polypeptide reads, in one-letter code: Leucyl/phenylalanyl-tRNA--protein transferase (234 aa).

Belongs to the L/F-transferase family.

Its subcellular location is the cytoplasm. The enzyme catalyses N-terminal L-lysyl-[protein] + L-leucyl-tRNA(Leu) = N-terminal L-leucyl-L-lysyl-[protein] + tRNA(Leu) + H(+). The catalysed reaction is N-terminal L-arginyl-[protein] + L-leucyl-tRNA(Leu) = N-terminal L-leucyl-L-arginyl-[protein] + tRNA(Leu) + H(+). It carries out the reaction L-phenylalanyl-tRNA(Phe) + an N-terminal L-alpha-aminoacyl-[protein] = an N-terminal L-phenylalanyl-L-alpha-aminoacyl-[protein] + tRNA(Phe). Functions in the N-end rule pathway of protein degradation where it conjugates Leu, Phe and, less efficiently, Met from aminoacyl-tRNAs to the N-termini of proteins containing an N-terminal arginine or lysine. This Salmonella gallinarum (strain 287/91 / NCTC 13346) protein is Leucyl/phenylalanyl-tRNA--protein transferase.